The following is a 581-amino-acid chain: A-type ATP synthase subunit A (581 aa).

Position 234–241 (234–241 (GPFGSGKT)) interacts with ATP.

The protein belongs to the ATPase alpha/beta chains family. As to quaternary structure, has multiple subunits with at least A(3), B(3), C, D, E, F, H, I and proteolipid K(x).

The protein localises to the cell membrane. It carries out the reaction ATP + H2O + 4 H(+)(in) = ADP + phosphate + 5 H(+)(out). Functionally, component of the A-type ATP synthase that produces ATP from ADP in the presence of a proton gradient across the membrane. The A chain is the catalytic subunit. The sequence is that of A-type ATP synthase subunit A from Archaeoglobus fulgidus (strain ATCC 49558 / DSM 4304 / JCM 9628 / NBRC 100126 / VC-16).